Consider the following 92-residue polypeptide: Elongation factor 1-beta (92 aa).

It belongs to the EF-1-beta/EF-1-delta family.

In terms of biological role, promotes the exchange of GDP for GTP in EF-1-alpha/GDP, thus allowing the regeneration of EF-1-alpha/GTP that could then be used to form the ternary complex EF-1-alpha/GTP/AAtRNA. In Pyrobaculum arsenaticum (strain DSM 13514 / JCM 11321 / PZ6), this protein is Elongation factor 1-beta.